The sequence spans 191 residues: Protein hugin (191 aa).

The N-terminal stretch at Met1–Ala24 is a signal peptide. The propeptide occupies Lys25–Leu119. Leucine amide occurs at positions 137 and 181. The propeptide occupies Ala185 to Asp191.

Belongs to the pyrokinin family. In terms of tissue distribution, expressed in a subgroup of neurosecretory cells in the subesophageal ganglion from embryonic stage 9 to larval stages.

The protein resides in the secreted. Probably has a role in larval molting. This is Protein hugin (Hug) from Drosophila melanogaster (Fruit fly).